Reading from the N-terminus, the 752-residue chain is Polyribonucleotide nucleotidyltransferase (752 aa).

Mg(2+)-binding residues include aspartate 519 and aspartate 525. The 60-residue stretch at proline 585–isoleucine 644 folds into the KH domain. The 73-residue stretch at glycine 656–valine 728 folds into the S1 motif domain. The interval proline 727–isoleucine 752 is disordered.

It belongs to the polyribonucleotide nucleotidyltransferase family. Mg(2+) is required as a cofactor.

The protein resides in the cytoplasm. It carries out the reaction RNA(n+1) + phosphate = RNA(n) + a ribonucleoside 5'-diphosphate. Its function is as follows. Involved in mRNA degradation. Catalyzes the phosphorolysis of single-stranded polyribonucleotides processively in the 3'- to 5'-direction. The protein is Polyribonucleotide nucleotidyltransferase of Pseudarthrobacter chlorophenolicus (strain ATCC 700700 / DSM 12829 / CIP 107037 / JCM 12360 / KCTC 9906 / NCIMB 13794 / A6) (Arthrobacter chlorophenolicus).